A 371-amino-acid polypeptide reads, in one-letter code: Monomethylxanthine methyltransferase 2 (371 aa).

S-adenosyl-L-homocysteine-binding residues include Tyr18, Cys61, Asn66, Asp100, Leu101, Ser139, Phe140, and Cys156. 3 residues coordinate theobromine: Tyr157, His160, and Trp161. The Mg(2+) site is built by Asn178, Asp260, Phe262, and Asn263. Position 355 (Tyr355) interacts with theobromine.

It belongs to the methyltransferase superfamily. Type-7 methyltransferase family. Mg(2+) serves as cofactor.

The enzyme catalyses 7-methylxanthine + S-adenosyl-L-methionine = theobromine + S-adenosyl-L-homocysteine + H(+). The protein operates within alkaloid biosynthesis. In terms of biological role, involved in the biosynthesis of caffeine. Catalyzes the conversion of 7-methylxanthine (7mX) to theobromine and with a lower activity of paraxanthine to caffeine. In Coffea canephora (Robusta coffee), this protein is Monomethylxanthine methyltransferase 2.